We begin with the raw amino-acid sequence, 103 residues long: Small ribosomal subunit protein uS10 (103 aa).

This sequence belongs to the universal ribosomal protein uS10 family. In terms of assembly, part of the 30S ribosomal subunit.

Involved in the binding of tRNA to the ribosomes. The sequence is that of Small ribosomal subunit protein uS10 from Stutzerimonas stutzeri (strain A1501) (Pseudomonas stutzeri).